A 548-amino-acid chain; its full sequence is Rhodopsin kinase grk7-b (548 aa).

The residue at position 33 (S33) is a Phosphoserine; by PKA. The 120-residue stretch at 53–172 (FEDICEQQPI…QTSLFFDRFV (120 aa)) folds into the RGS domain. Residues 187–446 (FYEFRTLGKG…NDDPRKHEFF (260 aa)) enclose the Protein kinase domain. ATP is bound by residues 193-201 (LGKGGFGEV) and K216. D312 functions as the Proton acceptor in the catalytic mechanism. The AGC-kinase C-terminal domain occupies 447 to 512 (KSINFPRLEA…GVVPIAWQQE (66 aa)). A disordered region spans residues 520 to 548 (DELSDPNRKESAAGLEDEEQQKSKSCTLL). C545 is modified (cysteine methyl ester). C545 is lipidated: S-geranylgeranyl cysteine. The propeptide at 546 to 548 (TLL) is removed in mature form.

It belongs to the protein kinase superfamily. AGC Ser/Thr protein kinase family. GPRK subfamily. Phosphorylation at Ser-33 is regulated by light and activated by cAMP. In terms of tissue distribution, expressed in the eyes (at protein level). Expressed in the eyes, the pineal gland and in the brain.

It is found in the membrane. The catalysed reaction is L-threonyl-[rhodopsin] + ATP = O-phospho-L-threonyl-[rhodopsin] + ADP + H(+). It carries out the reaction L-seryl-[rhodopsin] + ATP = O-phospho-L-seryl-[rhodopsin] + ADP + H(+). In terms of biological role, retina-specific kinase involved in the shutoff of the photoresponse and adaptation to changing light conditions via cone opsin phosphorylation, including rhodopsin (RHO). In Danio rerio (Zebrafish), this protein is Rhodopsin kinase grk7-b (grk7b).